A 303-amino-acid chain; its full sequence is MNPQDLKTIVSSGLLSFPVTDFDEQGDFRPKTYIERLEWLAPYGATALFAAGGTGEFFSLTGDEYPLIIKTAVNTCAGKVPIIAGVGGPTRFAIACAQEAERLGAHGILLLPHYLMEAGQEGLIAHVEAVCKSVKFGVIVYNRNVCKLTPESLAILADRCPNLIGFKDGVGNIETMSSIFMKMGDRFSYLGGLPTAEVYAAAYKALGTPVYSSAVFNFIPKTAMDFYHAVASDDLATQHRLLRDFFMPYLALRNKNPGYAVSIVKAGATIVGHDAGPVRPPLTDLKPAEMEELAVLIKSLGPQ.

It belongs to the DapA family.

It catalyses the reaction 5-dehydro-4-deoxy-D-glucarate + H(+) = 2,5-dioxopentanoate + CO2 + H2O. It functions in the pathway carbohydrate acid metabolism; D-glucarate degradation; 2,5-dioxopentanoate from D-glucarate: step 2/2. This Polaromonas naphthalenivorans (strain CJ2) protein is Probable 5-dehydro-4-deoxyglucarate dehydratase.